The sequence spans 218 residues: Peptide methionine sulfoxide reductase MsrA (218 aa).

Residue Cys-57 is part of the active site.

Belongs to the MsrA Met sulfoxide reductase family.

It catalyses the reaction L-methionyl-[protein] + [thioredoxin]-disulfide + H2O = L-methionyl-(S)-S-oxide-[protein] + [thioredoxin]-dithiol. The enzyme catalyses [thioredoxin]-disulfide + L-methionine + H2O = L-methionine (S)-S-oxide + [thioredoxin]-dithiol. Its function is as follows. Has an important function as a repair enzyme for proteins that have been inactivated by oxidation. Catalyzes the reversible oxidation-reduction of methionine sulfoxide in proteins to methionine. In Brucella anthropi (Ochrobactrum anthropi), this protein is Peptide methionine sulfoxide reductase MsrA.